We begin with the raw amino-acid sequence, 147 residues long: Adenylylsulfatase HINT1 (147 aa).

The 111-residue stretch at 37 to 147 (IFDKIISKEI…GGRQMNWPPG (111 aa)) folds into the HIT domain. Residues 131–135 (HIHVH) carry the Histidine triad motif motif. The active-site Tele-AMP-histidine intermediate is H133. H135 is a substrate binding site.

The protein localises to the peroxisome. It localises to the plastid. Its subcellular location is the chloroplast. The catalysed reaction is adenosine 5'-phosphosulfate + H2O = sulfate + AMP + 2 H(+). Its function is as follows. Possesses adenylylsulfatase activity in vitro. The sequence is that of Adenylylsulfatase HINT1 from Arabidopsis thaliana (Mouse-ear cress).